Consider the following 1217-residue polypeptide: Rho family-interacting cell polarization regulator 1 (1217 aa).

S22 carries the phosphoserine modification. Positions 83–112 (RGLTAYLEVHQQEQEKLQRQIKESKRNSRL) form a coiled coil. Phosphoserine occurs at positions 345 and 347. T351 carries the phosphothreonine modification. The disordered stretch occupies residues 371–413 (NGTAWSLSSESSDDSSSPQLSGTARYSSTPKPLVQQPEPLPVQ). Composition is skewed to low complexity over residues 376–391 (SLSS…PQLS) and 400–413 (PKPL…LPVQ). S452 and S455 each carry phosphoserine. The tract at residues 565-762 (TSTTVGSTHK…SPSSIVPEPQ (198 aa)) is disordered. Polar residues predominate over residues 579–594 (PLTSTGSIPSVTDSIQ). Over residues 595–649 (TTTSPTHTTPSPTHTTVSPTHSTPSPTHTTVSPSNAALSPSNATPSLSHSTTSPT) the composition is skewed to low complexity. The span at 650 to 661 (QKATMSTHTTSA) shows a compositional bias: polar residues. Residues 664–695 (PVQTTTSPISTTVSPSPSVDTAIISSSSAVPS) show a composition bias toward low complexity. A compositionally biased stretch (polar residues) spans 720–729 (ACTSSPSLAS). S742 carries the phosphoserine modification. Residues 786–828 (RRLEEALRTLMAALDDYRGQFPELQGLEQEVTRLESLLMQRQG) adopt a coiled-coil conformation. The disordered stretch occupies residues 850–874 (FLNDDEDEDNDSPGDRPTSSPEVVA). Acidic residues predominate over residues 852-861 (NDDEDEDNDS). Residues S868 and S869 each carry the phosphoserine modification.

This sequence belongs to the RIPOR family. As to quaternary structure, interacts (via N-terminus) with RHOA (GTP-bound form); this interaction links active RHOA to STK24 and STK26 kinases. Interacts with RHOB. Interacts with RHOC. Interacts (via C-terminus) with PDCD10; this interaction occurs in a Rho-independent manner. Interacts (via C-terminus) with STK24; this interaction occurs in a PDCD10-dependent and Rho-independent manner. Interacts (via C-terminus) with STK26; this interaction occurs in a PDCD10-dependent and Rho-independent manner. Interacts (via N-terminus) with 14-3-3 proteins; these interactions occur in a Rho-dependent manner.

It is found in the cytoplasm. Its subcellular location is the golgi apparatus. In terms of biological role, downstream effector protein for Rho-type small GTPases that plays a role in cell polarity and directional migration. Acts as an adapter protein, linking active Rho proteins to STK24 and STK26 kinases, and hence positively regulates Golgi reorientation in polarized cell migration upon Rho activation. Involved in the subcellular relocation of STK26 from the Golgi to cytoplasm punctae in a Rho- and PDCD10-dependent manner upon serum stimulation. The sequence is that of Rho family-interacting cell polarization regulator 1 from Rattus norvegicus (Rat).